We begin with the raw amino-acid sequence, 437 residues long: Sorting nexin-30 (437 aa).

Disordered regions lie at residues 1-44 and 54-73; these read MAGG…PDLL and LILP…SSSS. Residue T38 is modified to Phosphothreonine. At S40 the chain carries Phosphoserine. Positions 63–73 are enriched in low complexity; that stretch reads AGTSSPASSSS. The PX domain maps to 89–210; sequence RDLFVIVDDP…IFLTAKDLNA (122 aa). Residues R132, Q134, K162, and R176 each contribute to the a 1,2-diacyl-sn-glycero-3-phospho-(1D-myo-inositol-3-phosphate) site. The region spanning 234–437 is the BAR domain; sequence KLRTRPLEFA…PLLQEKQEAK (204 aa).

The protein belongs to the sorting nexin family. As to quaternary structure, heterodimer; heterodimerizes with SNX4.

It localises to the early endosome membrane. Functionally, involved in the regulation of endocytosis and in several stages of intracellular trafficking. Together with SNX4, involved in autophagosome assembly. The protein is Sorting nexin-30 of Homo sapiens (Human).